The chain runs to 429 residues: 3-phosphoshikimate 1-carboxyvinyltransferase (429 aa).

3-phosphoshikimate is bound by residues lysine 11, serine 12, and arginine 16. Lysine 11 serves as a coordination point for phosphoenolpyruvate. Residues glycine 82 and arginine 110 each contribute to the phosphoenolpyruvate site. Positions 155, 157, 302, and 329 each coordinate 3-phosphoshikimate. Phosphoenolpyruvate is bound at residue glutamine 157. Aspartate 302 functions as the Proton acceptor in the catalytic mechanism. Residues arginine 333 and arginine 385 each coordinate phosphoenolpyruvate.

The protein belongs to the EPSP synthase family. As to quaternary structure, monomer.

The protein localises to the cytoplasm. It carries out the reaction 3-phosphoshikimate + phosphoenolpyruvate = 5-O-(1-carboxyvinyl)-3-phosphoshikimate + phosphate. It functions in the pathway metabolic intermediate biosynthesis; chorismate biosynthesis; chorismate from D-erythrose 4-phosphate and phosphoenolpyruvate: step 6/7. Its function is as follows. Catalyzes the transfer of the enolpyruvyl moiety of phosphoenolpyruvate (PEP) to the 5-hydroxyl of shikimate-3-phosphate (S3P) to produce enolpyruvyl shikimate-3-phosphate and inorganic phosphate. This is 3-phosphoshikimate 1-carboxyvinyltransferase from Helicobacter acinonychis (strain Sheeba).